Here is a 282-residue protein sequence, read N- to C-terminus: Elongation factor Ts (282 aa).

Positions 80–83 are involved in Mg(2+) ion dislocation from EF-Tu; that stretch reads TDFV.

It belongs to the EF-Ts family.

It is found in the cytoplasm. Associates with the EF-Tu.GDP complex and induces the exchange of GDP to GTP. It remains bound to the aminoacyl-tRNA.EF-Tu.GTP complex up to the GTP hydrolysis stage on the ribosome. The polypeptide is Elongation factor Ts (tsf) (Chlamydia trachomatis serovar D (strain ATCC VR-885 / DSM 19411 / UW-3/Cx)).